A 572-amino-acid polypeptide reads, in one-letter code: Chaperonin CPN60-like 2, mitochondrial (572 aa).

A mitochondrion-targeting transit peptide spans 1–31; sequence MYRVLSKLSSSIGSSTSRKLVSGRIISSRNY.

This sequence belongs to the chaperonin (HSP60) family.

Its subcellular location is the mitochondrion. Its function is as follows. Implicated in mitochondrial protein import and macromolecular assembly. May facilitate the correct folding of imported proteins. May also prevent misfolding and promote the refolding and proper assembly of unfolded polypeptides generated under stress conditions in the mitochondrial matrix. In Arabidopsis thaliana (Mouse-ear cress), this protein is Chaperonin CPN60-like 2, mitochondrial.